The chain runs to 410 residues: Phospho-N-acetylmuramoyl-pentapeptide-transferase (410 aa).

Helical transmembrane passes span Arg-27 to Ile-47, Thr-77 to Met-97, Leu-99 to Gly-119, Leu-140 to Asn-160, Pro-213 to Ile-233, Gly-248 to Ser-268, Ile-288 to Tyr-308, Val-312 to Leu-332, Phe-337 to Val-357, and Val-389 to Phe-409.

This sequence belongs to the glycosyltransferase 4 family. MraY subfamily. Mg(2+) is required as a cofactor.

The protein localises to the cell inner membrane. It catalyses the reaction UDP-N-acetyl-alpha-D-muramoyl-L-alanyl-gamma-D-glutamyl-meso-2,6-diaminopimeloyl-D-alanyl-D-alanine + di-trans,octa-cis-undecaprenyl phosphate = di-trans,octa-cis-undecaprenyl diphospho-N-acetyl-alpha-D-muramoyl-L-alanyl-D-glutamyl-meso-2,6-diaminopimeloyl-D-alanyl-D-alanine + UMP. Its pathway is cell wall biogenesis; peptidoglycan biosynthesis. Its function is as follows. Catalyzes the initial step of the lipid cycle reactions in the biosynthesis of the cell wall peptidoglycan: transfers peptidoglycan precursor phospho-MurNAc-pentapeptide from UDP-MurNAc-pentapeptide onto the lipid carrier undecaprenyl phosphate, yielding undecaprenyl-pyrophosphoryl-MurNAc-pentapeptide, known as lipid I. This chain is Phospho-N-acetylmuramoyl-pentapeptide-transferase, found in Protochlamydia amoebophila (strain UWE25).